Consider the following 66-residue polypeptide: Light-harvesting protein B-800-850 alpha chain B (66 aa).

Over 1-11 (MNQGRIWTVVN) the chain is Cytoplasmic. A helical transmembrane segment spans residues 12–35 (PGVGLPLLLGSVTVIAILVHYAVL). His-31 is a binding site for a bacteriochlorophyll. Topologically, residues 36-66 (SNTTWFPKYWNGATVAAPAAAPAPAAPAAKK) are periplasmic.

Belongs to the antenna complex alpha subunit family. In terms of assembly, the core complex is formed by different alpha and beta chains, binding bacteriochlorophyll molecules, and arranged most probably in tetrameric structures disposed around the reaction center. The non-pigmented gamma chains may constitute additional components.

Its subcellular location is the cell inner membrane. Antenna complexes are light-harvesting systems, which transfer the excitation energy to the reaction centers. In Rhodopseudomonas palustris (strain ATCC BAA-98 / CGA009), this protein is Light-harvesting protein B-800-850 alpha chain B (pucAB).